The sequence spans 130 residues: Large ribosomal subunit protein bL12c (130 aa).

It belongs to the bacterial ribosomal protein bL12 family. Homodimer. Part of the ribosomal stalk of the 50S ribosomal subunit. Forms a multimeric L10(L12)X complex, where L10 forms an elongated spine to which 2 to 4 L12 dimers bind in a sequential fashion. Binds GTP-bound translation factors.

It is found in the plastid. Its function is as follows. Forms part of the ribosomal stalk which helps the ribosome interact with GTP-bound translation factors. Is thus essential for accurate translation. The polypeptide is Large ribosomal subunit protein bL12c (Prototheca wickerhamii).